The following is a 254-amino-acid chain: D-aminoacyl-tRNA deacylase (254 aa).

Positions 61–85 are disordered; sequence KPTLTVHTPGNLTEDNSRGGNSEEI. Polar residues predominate over residues 65–84; sequence TVHTPGNLTEDNSRGGNSEE.

Belongs to the DtdA deacylase family. As to quaternary structure, monomer. Zn(2+) serves as cofactor.

It carries out the reaction a D-aminoacyl-tRNA + H2O = a tRNA + a D-alpha-amino acid + H(+). It catalyses the reaction glycyl-tRNA(Ala) + H2O = tRNA(Ala) + glycine + H(+). Functionally, D-aminoacyl-tRNA deacylase with broad substrate specificity. By recycling D-aminoacyl-tRNA to D-amino acids and free tRNA molecules, this enzyme counteracts the toxicity associated with the formation of D-aminoacyl-tRNA entities in vivo. The sequence is that of D-aminoacyl-tRNA deacylase from Methanococcus maripaludis (strain C5 / ATCC BAA-1333).